Reading from the N-terminus, the 526-residue chain is Peptide chain release factor 3 (526 aa).

One can recognise a tr-type G domain in the interval 9 to 277 (NKRRTFAIIS…DFVEYAPGPQ (269 aa)). Residues 18–25 (SHPDAGKT), 86–90 (DTPGH), and 140–143 (NKLD) each bind GTP.

Belongs to the TRAFAC class translation factor GTPase superfamily. Classic translation factor GTPase family. PrfC subfamily.

Its subcellular location is the cytoplasm. Increases the formation of ribosomal termination complexes and stimulates activities of RF-1 and RF-2. It binds guanine nucleotides and has strong preference for UGA stop codons. It may interact directly with the ribosome. The stimulation of RF-1 and RF-2 is significantly reduced by GTP and GDP, but not by GMP. This chain is Peptide chain release factor 3, found in Legionella pneumophila (strain Paris).